We begin with the raw amino-acid sequence, 315 residues long: Porphobilinogen deaminase (315 aa).

Cysteine 238 carries the post-translational modification S-(dipyrrolylmethanemethyl)cysteine.

This sequence belongs to the HMBS family. As to quaternary structure, monomer. The cofactor is dipyrromethane.

The catalysed reaction is 4 porphobilinogen + H2O = hydroxymethylbilane + 4 NH4(+). It participates in porphyrin-containing compound metabolism; protoporphyrin-IX biosynthesis; coproporphyrinogen-III from 5-aminolevulinate: step 2/4. Functionally, tetrapolymerization of the monopyrrole PBG into the hydroxymethylbilane pre-uroporphyrinogen in several discrete steps. This is Porphobilinogen deaminase from Albidiferax ferrireducens (strain ATCC BAA-621 / DSM 15236 / T118) (Rhodoferax ferrireducens).